A 340-amino-acid polypeptide reads, in one-letter code: Probable quinone oxidoreductase (340 aa).

Belongs to the zinc-containing alcohol dehydrogenase family. Quinone oxidoreductase subfamily.

It catalyses the reaction 2 a quinone + NADPH + H(+) = 2 a 1,4-benzosemiquinone + NADP(+). This is Probable quinone oxidoreductase from Leishmania amazonensis.